The sequence spans 400 residues: Elongation factor Tu 2 (400 aa).

The tr-type G domain occupies 10–209 (KPHVNIGTIG…KVDEYIPTPQ (200 aa)). Residues 19–26 (GHVDHGKT) are G1. Position 19-26 (19-26 (GHVDHGKT)) interacts with GTP. Threonine 26 contributes to the Mg(2+) binding site. Residues 60–64 (GITIN) are G2. Residues 81–84 (DCPG) are G3. Residues 81 to 85 (DCPGH) and 136 to 139 (NKAD) each bind GTP. The segment at 136–139 (NKAD) is G4. The interval 174-176 (SAL) is G5.

The protein belongs to the TRAFAC class translation factor GTPase superfamily. Classic translation factor GTPase family. EF-Tu/EF-1A subfamily. Monomer.

Its subcellular location is the cytoplasm. It catalyses the reaction GTP + H2O = GDP + phosphate + H(+). In terms of biological role, GTP hydrolase that promotes the GTP-dependent binding of aminoacyl-tRNA to the A-site of ribosomes during protein biosynthesis. This is Elongation factor Tu 2 from Carboxydothermus hydrogenoformans (strain ATCC BAA-161 / DSM 6008 / Z-2901).